Here is a 113-residue protein sequence, read N- to C-terminus: MKIVAFTLVAFVALAGASCPYAAPAVAPAAAPGYPAPPCPTNYLFSCQPNLAPVPCAQQAPAYGSAGAYTEQVPRYVENPSREQLQRFHQRVGMAALMEELRGLGQGIQGQQY.

The signal sequence occupies residues 1 to 17; that stretch reads MKIVAFTLVAFVALAGA. Positions 33–70 constitute a VM domain; it reads GYPAPPCPTNYLFSCQPNLAPVPCAQQAPAYGSAGAYT.

This sequence belongs to the vitelline membrane family.

Its subcellular location is the secreted. Functionally, major early eggshell protein. The protein is Vitelline membrane protein Vm32E of Drosophila erecta (Fruit fly).